The following is a 603-amino-acid chain: Elongation factor 4 (603 aa).

Residues 7–189 (VRIRNFCIIA…AVVERVPPPP (183 aa)) enclose the tr-type G domain. GTP contacts are provided by residues 19-24 (DHGKST) and 136-139 (NKID).

The protein belongs to the TRAFAC class translation factor GTPase superfamily. Classic translation factor GTPase family. LepA subfamily.

It is found in the cell inner membrane. The catalysed reaction is GTP + H2O = GDP + phosphate + H(+). Required for accurate and efficient protein synthesis under certain stress conditions. May act as a fidelity factor of the translation reaction, by catalyzing a one-codon backward translocation of tRNAs on improperly translocated ribosomes. Back-translocation proceeds from a post-translocation (POST) complex to a pre-translocation (PRE) complex, thus giving elongation factor G a second chance to translocate the tRNAs correctly. Binds to ribosomes in a GTP-dependent manner. The chain is Elongation factor 4 from Nostoc sp. (strain PCC 7120 / SAG 25.82 / UTEX 2576).